The sequence spans 327 residues: Methionyl-tRNA formyltransferase (327 aa).

121-124 (SLLP) serves as a coordination point for (6S)-5,6,7,8-tetrahydrofolate.

Belongs to the Fmt family.

It catalyses the reaction L-methionyl-tRNA(fMet) + (6R)-10-formyltetrahydrofolate = N-formyl-L-methionyl-tRNA(fMet) + (6S)-5,6,7,8-tetrahydrofolate + H(+). Attaches a formyl group to the free amino group of methionyl-tRNA(fMet). The formyl group appears to play a dual role in the initiator identity of N-formylmethionyl-tRNA by promoting its recognition by IF2 and preventing the misappropriation of this tRNA by the elongation apparatus. The polypeptide is Methionyl-tRNA formyltransferase (Burkholderia vietnamiensis (strain G4 / LMG 22486) (Burkholderia cepacia (strain R1808))).